Consider the following 514-residue polypeptide: Membrane-bound lytic murein transglycosylase F (514 aa).

An N-terminal signal peptide occupies residues 1-30; sequence MLSNNPLITKFRELFTVALVLALLSGCQWQ. Positions 31–271 are non-LT domain; it reads DDNLTDLEKI…QLEEKYFGHV (241 aa). An LT domain region spans residues 272 to 514; sequence GSFDYVDTRA…KTIEDPGPSQ (243 aa). Glu316 is an active-site residue. A disordered region spans residues 482-514; sequence PVPPRQANVDGSLNNEAAISSAEKTIEDPGPSQ. Polar residues predominate over residues 490 to 499; that stretch reads VDGSLNNEAA.

In the N-terminal section; belongs to the bacterial solute-binding protein 3 family. The protein in the C-terminal section; belongs to the transglycosylase Slt family.

The protein resides in the cell outer membrane. It catalyses the reaction Exolytic cleavage of the (1-&gt;4)-beta-glycosidic linkage between N-acetylmuramic acid (MurNAc) and N-acetylglucosamine (GlcNAc) residues in peptidoglycan, from either the reducing or the non-reducing ends of the peptidoglycan chains, with concomitant formation of a 1,6-anhydrobond in the MurNAc residue.. In terms of biological role, murein-degrading enzyme that degrades murein glycan strands and insoluble, high-molecular weight murein sacculi, with the concomitant formation of a 1,6-anhydromuramoyl product. Lytic transglycosylases (LTs) play an integral role in the metabolism of the peptidoglycan (PG) sacculus. Their lytic action creates space within the PG sacculus to allow for its expansion as well as for the insertion of various structures such as secretion systems and flagella. In Photobacterium profundum (strain SS9), this protein is Membrane-bound lytic murein transglycosylase F.